Here is a 154-residue protein sequence, read N- to C-terminus: UPF0178 protein ABC1688 (154 aa).

It belongs to the UPF0178 family.

In Shouchella clausii (strain KSM-K16) (Alkalihalobacillus clausii), this protein is UPF0178 protein ABC1688.